The chain runs to 160 residues: Nutritionally-regulated adipose and cardiac enriched protein homolog (160 aa).

The tract at residues 1 to 69 (MRTAAGAVSP…AKPQRTSRRV (69 aa)) is disordered. Composition is skewed to basic and acidic residues over residues 12–25 (SRPE…KNEE) and 33–42 (CRAEREDNRK). The helical transmembrane segment at 101-121 (GGSLLLQLCVCVLLVLALGLY) threads the bilayer.

It localises to the cell membrane. In Homo sapiens (Human), this protein is Nutritionally-regulated adipose and cardiac enriched protein homolog (NRAC).